We begin with the raw amino-acid sequence, 201 residues long: Holliday junction branch migration complex subunit RuvA (201 aa).

Residues 1 to 65 (MIAYIEGRVA…EDALELYGFS (65 aa)) form a domain I region. Residues 66–143 (GWDERQTFLV…KVESLPASAG (78 aa)) form a domain II region. The flexible linker stretch occupies residues 143-147 (GLAAG). The interval 148–201 (VPGSVLRDAVQALGNLGYAEEEAAPVLKNILKQDPDLDVSEALRAALKALAKAR) is domain III.

The protein belongs to the RuvA family. As to quaternary structure, homotetramer. Forms an RuvA(8)-RuvB(12)-Holliday junction (HJ) complex. HJ DNA is sandwiched between 2 RuvA tetramers; dsDNA enters through RuvA and exits via RuvB. An RuvB hexamer assembles on each DNA strand where it exits the tetramer. Each RuvB hexamer is contacted by two RuvA subunits (via domain III) on 2 adjacent RuvB subunits; this complex drives branch migration. In the full resolvosome a probable DNA-RuvA(4)-RuvB(12)-RuvC(2) complex forms which resolves the HJ.

It localises to the cytoplasm. In terms of biological role, the RuvA-RuvB-RuvC complex processes Holliday junction (HJ) DNA during genetic recombination and DNA repair, while the RuvA-RuvB complex plays an important role in the rescue of blocked DNA replication forks via replication fork reversal (RFR). RuvA specifically binds to HJ cruciform DNA, conferring on it an open structure. The RuvB hexamer acts as an ATP-dependent pump, pulling dsDNA into and through the RuvAB complex. HJ branch migration allows RuvC to scan DNA until it finds its consensus sequence, where it cleaves and resolves the cruciform DNA. The chain is Holliday junction branch migration complex subunit RuvA from Oleidesulfovibrio alaskensis (strain ATCC BAA-1058 / DSM 17464 / G20) (Desulfovibrio alaskensis).